The chain runs to 940 residues: Alanine--tRNA ligase (940 aa).

Zn(2+)-binding residues include His-581, His-585, Cys-683, and His-687.

This sequence belongs to the class-II aminoacyl-tRNA synthetase family. The cofactor is Zn(2+).

It is found in the cytoplasm. The catalysed reaction is tRNA(Ala) + L-alanine + ATP = L-alanyl-tRNA(Ala) + AMP + diphosphate. Catalyzes the attachment of alanine to tRNA(Ala) in a two-step reaction: alanine is first activated by ATP to form Ala-AMP and then transferred to the acceptor end of tRNA(Ala). Also edits incorrectly charged Ser-tRNA(Ala) and Gly-tRNA(Ala) via its editing domain. This Leptospira borgpetersenii serovar Hardjo-bovis (strain JB197) protein is Alanine--tRNA ligase.